The sequence spans 105 residues: Defensin-like protein (105 aa).

An N-terminal signal peptide occupies residues 1–25 (MARSLCFMAFAILAMMLFVAYEVQA). 4 disulfide bridges follow: C28–C72, C39–C59, C45–C66, and C49–C68.

Belongs to the DEFL family. In terms of tissue distribution, flower. Found in petals, stamen and pistils, but not in sepals. In particular, accumulation in a configuration surrounding the inner reproductive whorls.

Its subcellular location is the secreted. It localises to the cell wall. The protein localises to the vacuole. Involved in floral organogenesis. May play a protective role in flowers by protecting the reproductive organs from potential pathogen attack. This chain is Defensin-like protein (FST), found in Nicotiana tabacum (Common tobacco).